The following is a 502-amino-acid chain: MQLPTQQVAVLDAASTDDPQRIEALAADTDYPPETIAGAALALEAEGLVAVTETTTTTVSLTDEGHAYATDGLPEVRLYRAALDAGADDAPVEMGSVIGAAGLDGPQVDIALSNYARKGYGTIDSGALAADPDADPENDPEADALATLTDGDSVDDDAVVDQLASRDLVTVSERTVRSVTLTEAGVTELMAGVEATDEVGELTPELLASGEWADVEFADYNVAADAADHTPGKTHVLRQAAERVTDVLVGMGFQEMAGPHVDADFYINDCLFMPQDHPARNHWDRFALSNPARIDELPDALVERVERAHREGAGDDGDGYHSPWDEDFARALALRGHTTSLTARHLAGLADADVEAPARYFSVEKAYRNDTLDATHLLEFFQIEGWVLADDLSVRDLMGTFREFYSQFGIHDLQFKPTYNPYTEPSFELFGRHPETGELIEIGNSGIFRPEMLDPLDVDGDVMAWGLALERLLMLMTGFEDIRDVHGTLCDVGFLRNAEVVY.

Residues T339, 382 to 384 (QIE), and Y422 contribute to the L-phenylalanine site. E424 is a Mg(2+) binding site. An L-phenylalanine-binding site is contributed by F448.

Belongs to the class-II aminoacyl-tRNA synthetase family. Phe-tRNA synthetase alpha subunit type 2 subfamily. Tetramer of two alpha and two beta subunits. Requires Mg(2+) as cofactor.

It is found in the cytoplasm. The enzyme catalyses tRNA(Phe) + L-phenylalanine + ATP = L-phenylalanyl-tRNA(Phe) + AMP + diphosphate + H(+). This Halobacterium salinarum (strain ATCC 29341 / DSM 671 / R1) protein is Phenylalanine--tRNA ligase alpha subunit.